The chain runs to 363 residues: Aminomethyltransferase (363 aa).

The protein belongs to the GcvT family. As to quaternary structure, the glycine cleavage system is composed of four proteins: P, T, L and H.

The catalysed reaction is N(6)-[(R)-S(8)-aminomethyldihydrolipoyl]-L-lysyl-[protein] + (6S)-5,6,7,8-tetrahydrofolate = N(6)-[(R)-dihydrolipoyl]-L-lysyl-[protein] + (6R)-5,10-methylene-5,6,7,8-tetrahydrofolate + NH4(+). In terms of biological role, the glycine cleavage system catalyzes the degradation of glycine. This chain is Aminomethyltransferase, found in Staphylococcus aureus (strain MRSA252).